A 266-amino-acid polypeptide reads, in one-letter code: Methionine aminopeptidase 1 (266 aa).

A substrate-binding site is contributed by His88. Residues Asp106, Asp117, and His186 each contribute to the a divalent metal cation site. Position 193 (His193) interacts with substrate. Positions 219 and 250 each coordinate a divalent metal cation.

The protein belongs to the peptidase M24A family. Methionine aminopeptidase type 1 subfamily. In terms of assembly, monomer. Co(2+) serves as cofactor. Requires Zn(2+) as cofactor. It depends on Mn(2+) as a cofactor. The cofactor is Fe(2+).

The enzyme catalyses Release of N-terminal amino acids, preferentially methionine, from peptides and arylamides.. In terms of biological role, removes the N-terminal methionine from nascent proteins. The N-terminal methionine is often cleaved when the second residue in the primary sequence is small and uncharged (Met-Ala-, Cys, Gly, Pro, Ser, Thr, or Val). Requires deformylation of the N(alpha)-formylated initiator methionine before it can be hydrolyzed. In Mycobacterium tuberculosis (strain CDC 1551 / Oshkosh), this protein is Methionine aminopeptidase 1.